The chain runs to 524 residues: Probable endopeptidase p60 (524 aa).

Residues 1–27 (MNMKKATIAATAGIAVTAFAAPTIASA) form the signal peptide. Positions 28–71 (STVVVEAGDTLWGIAQSKGTTVDALKKANNLTSDKIVPGQKLQV) constitute a LysM 1 domain. In terms of domain architecture, SH3b spans 78–142 (KTEKSVSATW…VNGKYLGDAV (65 aa)). Residues 150–188 (QEVKQETTKQTAPAAETKTEVKQSTPAPTAPKAAETKTA) are disordered. A compositionally biased stretch (low complexity) spans 174–188 (TPAPTAPKAAETKTA). In terms of domain architecture, LysM 2 spans 196–239 (TTHTVKSGDTIWALSVKYGASVQDLMSWNNLSSSSIYVGQKIAV). The segment covering 272–299 (NTNTTVKKEVTTQTQTNTTKAPAQAAKP) has biased composition (low complexity). A disordered region spans residues 272 to 313 (NTNTTVKKEVTTQTQTNTTKAPAQAAKPAPAPAPAPTVNTNA). Residues 314–357 (STYTVKSGDSLSKIANTFGTSVSKIKALNNLTSDNLQVGTVLKV) form the LysM 3 domain. Positions 360–408 (TVPTTNTNNNSNTTAPTTNTSNNNTSSNTSTPSKNTNTNTNQGSSNSAS) are disordered. Low complexity predominate over residues 362 to 408 (PTTNTNNNSNTTAPTTNTSNNNTSSNTSTPSKNTNTNTNQGSSNSAS). Positions 406-524 (SASASALIAE…GKYLVGFGRV (119 aa)) constitute a NlpC/P60 domain. Cysteine 436 (nucleophile) is an active-site residue. Histidine 486 acts as the Proton acceptor in catalysis. Asparagine 498 is a catalytic residue.

The protein belongs to the peptidase C40 family.

In terms of biological role, this major extracellular protein may be involved in the invasion of non-professional phagocytic cells by Listeria. In Listeria welshimeri, this protein is Probable endopeptidase p60 (iap).